We begin with the raw amino-acid sequence, 147 residues long: uncharacterized protein (147 aa).

A helical transmembrane segment spans residues 3 to 23; sequence APMVGMVVLVVTLGAAVLALS.

It to M.tuberculosis Rv1312.

The protein localises to the membrane. This is an uncharacterized protein from Mycobacterium leprae (strain TN).